Reading from the N-terminus, the 986-residue chain is Bifunctional glutamine synthetase adenylyltransferase/adenylyl-removing enzyme (986 aa).

The adenylyl removase stretch occupies residues 1–475 (MSFPLAHVDA…VFDHLIGEEK (475 aa)). The adenylyl transferase stretch occupies residues 481–986 (TETLWHDFLE…LFEHNDKYEE (506 aa)).

This sequence belongs to the GlnE family. Mg(2+) is required as a cofactor.

The enzyme catalyses [glutamine synthetase]-O(4)-(5'-adenylyl)-L-tyrosine + phosphate = [glutamine synthetase]-L-tyrosine + ADP. It catalyses the reaction [glutamine synthetase]-L-tyrosine + ATP = [glutamine synthetase]-O(4)-(5'-adenylyl)-L-tyrosine + diphosphate. Its function is as follows. Involved in the regulation of glutamine synthetase GlnA, a key enzyme in the process to assimilate ammonia. When cellular nitrogen levels are high, the C-terminal adenylyl transferase (AT) inactivates GlnA by covalent transfer of an adenylyl group from ATP to specific tyrosine residue of GlnA, thus reducing its activity. Conversely, when nitrogen levels are low, the N-terminal adenylyl removase (AR) activates GlnA by removing the adenylyl group by phosphorolysis, increasing its activity. The regulatory region of GlnE binds the signal transduction protein PII (GlnB) which indicates the nitrogen status of the cell. The sequence is that of Bifunctional glutamine synthetase adenylyltransferase/adenylyl-removing enzyme from Pasteurella multocida (strain Pm70).